The following is a 1297-amino-acid chain: Protein ENHANCED DOWNY MILDEW 2 (1297 aa).

Residues 222–281 form a PHD-type 1; degenerate zinc finger; the sequence is ESVCAICDNGGEILCCEGSCLRSFHATKKDGEDSLCDSLGFNKMQVEAIQKYFCPNCEHK. Zn(2+)-binding residues include Cys-237, Cys-241, Cys-275, Cys-278, Cys-285, Cys-288, Cys-306, Cys-311, His-316, Cys-319, Cys-346, and His-349. The PHD-type 2; atypical zinc-finger motif lies at 282 to 352; it reads IHQCFICKNL…EYTCPLHKCS (71 aa). The PHD-type 3; degenerate zinc finger occupies 351 to 417; sequence CSVCENGEVK…RVLIYCQEHE (67 aa). The Nuclear localization signal 1 motif lies at 445 to 452; sequence QRRILESH. Disordered stretches follow at residues 471 to 547 and 562 to 598; these read CGKA…ARDA and TQEP…IPTL. The segment covering 475-487 has biased composition (low complexity); that stretch reads SKNSFRSSFPSSK. The Nuclear localization signal 2 motif lies at 492-499; the sequence is TKKHGLVS. Residues 526–547 show a composition bias toward basic and acidic residues; the sequence is KMMEDSREAGKNKLGVKEARDA. Short sequence motifs (nuclear localization signal) lie at residues 610 to 617 and 979 to 986; these read MKKATEEI and LKKEGKTK. Basic and acidic residues-rich tracts occupy residues 969–990 and 1096–1109; these read QSDH…DYSG and EVSR…RTSR. Disordered stretches follow at residues 969–1017, 1085–1109, and 1260–1297; these read QSDH…GELS, HGCK…RTSR, and FPLP…WIND.

As to quaternary structure, interacts with WNK8 in nucleus; this interaction is involved in developmental processes regulation but not in RPP7-dependent disease resistance. Interacts with EML1 and EML2 in nucleus. Component of the ASI1-AIPP1-EDM2 (AAE) RNA regulatory complex composed of at least AIPP1/EDM3, ASI1 and EDM2 and may contain CPL2, AIPP2 and AIPP3/BDT1. Binds directly to AIPP1/EDM3. Co-associates with AIPP1/EDM3 to histone H3 lysine 9 dimethylation (H3K9me2)-marked chromatin and transcripts at a critical proximal polyadenylation site of RPP7 to hamper proximal transcript polyadeylation/termination. In terms of processing, phosphorylated by WNK8.

The protein localises to the nucleus. In terms of biological role, cellular antisilencing factor and regulator of genome DNA methylation patterns involved in the regulation of chromatin states. Together with SUVH4, monitors repressive epigenetic marks H3K27me1, H3K9me2, and prevents DNA-methylation at CHG sites, affecting especially the expression of transposons and developmentally important genes. Collaboratively with ASI1 and AIPP1/EDM3, the AAE complex regulates alternative RNA processing (e.g. alternative splicing) and epigenetic silencing (e.g. H3K9me2) of intronic heterochromatin-containing genes as well as genic heterochromatin-containing genes by promoting distal 3' polyadenylation. Epigenetic reader that binds DNA and contributes to transcriptional transposable element (TE) silencing by modulating levels of the repressive post-translational histone modifications (PHM) H3K9me2. In cv. Columbia, required for RPP7-dependent disease resistance against the Hyaloperonospora arabidopsidis isolate Hiks1, by promoting levels of RPP7 via alternative polyadenylation (APA), resulting from cooption of epigenetic information at the TE insertion locus COPIA-R7. Exhibits a global role in NLR (nucleotide-binding, leucine-rich repeat) defense genes epigenetic (e.g. H3K9me2 hallmarks) expression control; promotes the accumulation of RPP7, RPP4 and some other proteins, but mediates the repression of several other NLR products, probably to compensate for fitness penalties caused by defense mechanisms. Regulates development processes such as the formation of leaf pavement cells, leaf expansion, fertility and flowering. Prevents FLC accumulation to control flowering. Modulates stomatal development by regulating the methylation-mediated silencing of ERECTA receptor genes (e.g. ER, ERL1 and ERL2) and preventing cell divisions. In Arabidopsis thaliana (Mouse-ear cress), this protein is Protein ENHANCED DOWNY MILDEW 2.